A 101-amino-acid polypeptide reads, in one-letter code: Small ribosomal subunit protein uS14 (101 aa).

Residues 36–61 (ASAEDRRAARQKLQSLPRNSSPVRQR) form a disordered region. Polar residues predominate over residues 47–59 (KLQSLPRNSSPVR).

Belongs to the universal ribosomal protein uS14 family. In terms of assembly, part of the 30S ribosomal subunit. Contacts proteins S3 and S10.

Binds 16S rRNA, required for the assembly of 30S particles and may also be responsible for determining the conformation of the 16S rRNA at the A site. This Methylobacillus flagellatus (strain ATCC 51484 / DSM 6875 / VKM B-1610 / KT) protein is Small ribosomal subunit protein uS14.